Here is a 137-residue protein sequence, read N- to C-terminus: Gonadotropin subunit beta-1 (137 aa).

A signal peptide spans 1 to 24; that stretch reads MYCTHLKTLQLVVMATLWVTPVRA. Intrachain disulfides connect C32–C78, C46–C93, C55–C108, C59–C110, and C113–C120. N-linked (GlcNAc...) asparagine glycosylation occurs at N36.

The protein belongs to the glycoprotein hormones subunit beta family. Heterodimer of an alpha and a beta chain.

It is found in the secreted. Involved in gametogenesis and steroidogenesis. This Oncorhynchus masou (Cherry salmon) protein is Gonadotropin subunit beta-1 (cgba).